Reading from the N-terminus, the 291-residue chain is Protease HtpX homolog (291 aa).

Helical transmembrane passes span 4–24 (IALFLITNLAVMAVLGITASL) and 38–58 (LGALLGFAMVMGFGGAFISLL). H144 is a binding site for Zn(2+). E145 is a catalytic residue. A Zn(2+)-binding site is contributed by H148. The next 2 helical transmembrane spans lie at 159–179 (LIQGVMNTFVVFLSRAIGYFI) and 197–217 (VTTVVLDLLLGLVAAMIVAWF). Position 222 (E222) interacts with Zn(2+).

It belongs to the peptidase M48B family. Zn(2+) is required as a cofactor.

The protein localises to the cell inner membrane. The sequence is that of Protease HtpX homolog from Leptothrix cholodnii (strain ATCC 51168 / LMG 8142 / SP-6) (Leptothrix discophora (strain SP-6)).